The chain runs to 907 residues: Protein translocase subunit SecA (907 aa).

ATP is bound by residues Gln87, 105-109, and Asp512; that span reads GEGKT. A disordered region spans residues 834 to 907; that stretch reads QEDVERMEEQ…KKYKQCHGKI (74 aa). Composition is skewed to basic and acidic residues over residues 836-853 and 873-888; these read DVERMEEQRRLQAEEAAR and EEAHSPMVREERKVGR. Cys892, Cys894, Cys903, and His904 together coordinate Zn(2+). Positions 898–907 are enriched in basic residues; that stretch reads KKYKQCHGKI.

It belongs to the SecA family. Monomer and homodimer. Part of the essential Sec protein translocation apparatus which comprises SecA, SecYEG and auxiliary proteins SecDF-YajC and YidC. It depends on Zn(2+) as a cofactor.

It localises to the cell inner membrane. The protein localises to the cytoplasm. The enzyme catalyses ATP + H2O + cellular proteinSide 1 = ADP + phosphate + cellular proteinSide 2.. Part of the Sec protein translocase complex. Interacts with the SecYEG preprotein conducting channel. Has a central role in coupling the hydrolysis of ATP to the transfer of proteins into and across the cell membrane, serving both as a receptor for the preprotein-SecB complex and as an ATP-driven molecular motor driving the stepwise translocation of polypeptide chains across the membrane. The protein is Protein translocase subunit SecA of Aliivibrio fischeri (strain ATCC 700601 / ES114) (Vibrio fischeri).